The sequence spans 78 residues: Rubredoxin (78 aa).

One can recognise a Rubredoxin-like domain in the interval 23-74 (DARLECKICWWEYDPEVGDPVWQIAPGTSFSALPAHWRCPNCDGEAEQFMVL). Fe cation is bound by residues Cys28, Cys31, Cys61, and Cys64.

Belongs to the rubredoxin family. Requires Fe(3+) as cofactor.

In terms of biological role, rubredoxin is a small nonheme, iron protein lacking acid-labile sulfide. Its single Fe, chelated to 4 Cys, functions as an electron acceptor and may also stabilize the conformation of the molecule. Could be involved in hydrogenase-linked redox processes. The chain is Rubredoxin (hoxR) from Cupriavidus necator (strain ATCC 17699 / DSM 428 / KCTC 22496 / NCIMB 10442 / H16 / Stanier 337) (Ralstonia eutropha).